The sequence spans 181 residues: Large ribosomal subunit protein uL5 (181 aa).

This sequence belongs to the universal ribosomal protein uL5 family. Part of the 50S ribosomal subunit; contacts the 5S rRNA and probably tRNA. Forms a bridge to the 30S subunit in the 70S ribosome.

This is one of the proteins that bind and probably mediate the attachment of the 5S RNA into the large ribosomal subunit, where it forms part of the central protuberance. In the 70S ribosome it contacts protein S13 of the 30S subunit (bridge B1b), connecting the 2 subunits; this bridge is implicated in subunit movement. May contact the P site tRNA; the 5S rRNA and some of its associated proteins might help stabilize positioning of ribosome-bound tRNAs. The polypeptide is Large ribosomal subunit protein uL5 (Methanococcus maripaludis (strain C5 / ATCC BAA-1333)).